A 96-amino-acid chain; its full sequence is Secreted RxLR effector protein 123 (96 aa).

The first 22 residues, 1–22 (MVGAYYVGIALLVAGGSQTAAG), serve as a signal peptide directing secretion. The short motif at 49 to 70 (RFLRKSRNPKDNLMLSEANEER) is the RxLR-dEER element. Positions 57 to 96 (PKDNLMLSEANEERTPSSPSNSLTEFIVSEPITTNVMRTE) are disordered. The span at 87–96 (PITTNVMRTE) shows a compositional bias: polar residues.

Belongs to the RxLR effector family.

Its subcellular location is the secreted. The protein resides in the host nucleus. It is found in the host cytoplasm. Its function is as follows. Secreted effector that dos not suppress the host cell death induced by cell death-inducing proteins. In Plasmopara viticola (Downy mildew of grapevine), this protein is Secreted RxLR effector protein 123.